The primary structure comprises 404 residues: MQCEEKPVTERVVLAYSGGLDTSVAIGWIAEETGAEVIAVAVDVGQGGEDLDVIRKRALACGAVEAEVADAKDEFADEYCLPAVKANALYMDRYPLVSALSRPTIVKHLVAAAQKHGATTVAHGCTGKGNDQVRFEAGIVALAPGLKCIAPVRDYAMTRDKAIAFCEEKRLPIATTKKSPYSIDQNVFGRAVETGFLEDIWNAPIEDIYEYTSNPAEPREADEVVISFKEGVPVAIDGRPVTVLQAIQQLNERAGAQGVGRIDMVEDRLVGIKSREVYEAPGAIALITAHQELENVTVERELARYKRQVEQRWGELVYDGQWFSPLKRALEGFIDEANQHVNGDIRMTLHGGRAVVTGRRSETSLYDFNLATYDTGDSFDQAAAKGFIDIYSLSSKIAAKRDLA.

15 to 23 contacts ATP; sequence AYSGGLDTS. Y94 serves as a coordination point for L-citrulline. Position 124 (G124) interacts with ATP. Residues T126, N130, and D131 each coordinate L-aspartate. N130 is a binding site for L-citrulline. L-citrulline contacts are provided by R134, S182, E266, and Y278.

It belongs to the argininosuccinate synthase family. Type 1 subfamily. Homotetramer.

The protein resides in the cytoplasm. The catalysed reaction is L-citrulline + L-aspartate + ATP = 2-(N(omega)-L-arginino)succinate + AMP + diphosphate + H(+). Its pathway is amino-acid biosynthesis; L-arginine biosynthesis; L-arginine from L-ornithine and carbamoyl phosphate: step 2/3. In Streptomyces avermitilis (strain ATCC 31267 / DSM 46492 / JCM 5070 / NBRC 14893 / NCIMB 12804 / NRRL 8165 / MA-4680), this protein is Argininosuccinate synthase.